Consider the following 784-residue polypeptide: Endonuclease MutS2 (784 aa).

335 to 342 (GPNTGGKT) provides a ligand contact to ATP. In terms of domain architecture, Smr spans 709–784 (LDLRGERYED…GTGVTIVELK (76 aa)).

Belongs to the DNA mismatch repair MutS family. MutS2 subfamily. In terms of assembly, homodimer. Binds to stalled ribosomes, contacting rRNA.

Endonuclease that is involved in the suppression of homologous recombination and thus may have a key role in the control of bacterial genetic diversity. Functionally, acts as a ribosome collision sensor, splitting the ribosome into its 2 subunits. Detects stalled/collided 70S ribosomes which it binds and splits by an ATP-hydrolysis driven conformational change. Acts upstream of the ribosome quality control system (RQC), a ribosome-associated complex that mediates the extraction of incompletely synthesized nascent chains from stalled ribosomes and their subsequent degradation. Probably generates substrates for RQC. The sequence is that of Endonuclease MutS2 from Geobacillus kaustophilus (strain HTA426).